We begin with the raw amino-acid sequence, 174 residues long: Nucleoside-triphosphatase THEP1 (174 aa).

ATP is bound by residues 15-22 (GMPGVGKT) and 102-109 (LAIVDEIG).

Belongs to the THEP1 NTPase family.

The catalysed reaction is a ribonucleoside 5'-triphosphate + H2O = a ribonucleoside 5'-diphosphate + phosphate + H(+). Functionally, has nucleotide phosphatase activity towards ATP, GTP, CTP, TTP and UTP. May hydrolyze nucleoside diphosphates with lower efficiency. The protein is Nucleoside-triphosphatase THEP1 of Pyrobaculum islandicum (strain DSM 4184 / JCM 9189 / GEO3).